Consider the following 327-residue polypeptide: tRNA pseudouridine synthase B (327 aa).

Asp69 serves as the catalytic Nucleophile. 3 residues coordinate substrate: Tyr97, Tyr201, and Leu222.

It belongs to the pseudouridine synthase TruB family. Type 1 subfamily.

The enzyme catalyses uridine(55) in tRNA = pseudouridine(55) in tRNA. Responsible for synthesis of pseudouridine from uracil-55 in the psi GC loop of transfer RNAs. The chain is tRNA pseudouridine synthase B from Wigglesworthia glossinidia brevipalpis.